Consider the following 193-residue polypeptide: Xanthine phosphoribosyltransferase (193 aa).

Xanthine-binding residues include leucine 20 and threonine 27. 128–132 contacts 5-phospho-alpha-D-ribose 1-diphosphate; it reads ANGQA. Residue lysine 156 participates in xanthine binding.

The protein belongs to the purine/pyrimidine phosphoribosyltransferase family. Xpt subfamily. Homodimer.

It is found in the cytoplasm. It catalyses the reaction XMP + diphosphate = xanthine + 5-phospho-alpha-D-ribose 1-diphosphate. It participates in purine metabolism; XMP biosynthesis via salvage pathway; XMP from xanthine: step 1/1. In terms of biological role, converts the preformed base xanthine, a product of nucleic acid breakdown, to xanthosine 5'-monophosphate (XMP), so it can be reused for RNA or DNA synthesis. The protein is Xanthine phosphoribosyltransferase of Streptococcus uberis (strain ATCC BAA-854 / 0140J).